Consider the following 353-residue polypeptide: uncharacterized protein (353 aa).

A compositionally biased stretch (polar residues) spans 233–245 (ASCSNNEPSASLE). The tract at residues 233–265 (ASCSNNEPSASLESESRHFSPVNSLSPSSLSTD) is disordered. A compositionally biased stretch (low complexity) spans 252-263 (SPVNSLSPSSLS).

This is an uncharacterized protein from Saccharomyces cerevisiae (strain ATCC 204508 / S288c) (Baker's yeast).